The sequence spans 321 residues: Lipoyl synthase (321 aa).

Positions 68, 73, 79, 94, 98, 101, and 308 each coordinate [4Fe-4S] cluster. The Radical SAM core domain maps to 80 to 297 (FNHGTATFMI…KEQALAMGFT (218 aa)).

This sequence belongs to the radical SAM superfamily. Lipoyl synthase family. [4Fe-4S] cluster is required as a cofactor.

It localises to the cytoplasm. It catalyses the reaction [[Fe-S] cluster scaffold protein carrying a second [4Fe-4S](2+) cluster] + N(6)-octanoyl-L-lysyl-[protein] + 2 oxidized [2Fe-2S]-[ferredoxin] + 2 S-adenosyl-L-methionine + 4 H(+) = [[Fe-S] cluster scaffold protein] + N(6)-[(R)-dihydrolipoyl]-L-lysyl-[protein] + 4 Fe(3+) + 2 hydrogen sulfide + 2 5'-deoxyadenosine + 2 L-methionine + 2 reduced [2Fe-2S]-[ferredoxin]. It participates in protein modification; protein lipoylation via endogenous pathway; protein N(6)-(lipoyl)lysine from octanoyl-[acyl-carrier-protein]: step 2/2. In terms of biological role, catalyzes the radical-mediated insertion of two sulfur atoms into the C-6 and C-8 positions of the octanoyl moiety bound to the lipoyl domains of lipoate-dependent enzymes, thereby converting the octanoylated domains into lipoylated derivatives. The sequence is that of Lipoyl synthase from Proteus mirabilis (strain HI4320).